The sequence spans 1256 residues: Muramidase-released protein (1256 aa).

The N-terminal stretch at 1 to 47 (MRRSNKKSFDWYGTKQQFSIRKYHFGAASVLLGVSLVLGAGAQVVKA) is a signal peptide. Small repeat units lie at residues 663 to 681 (KTTGTVVAGTTTVKYVYEK) and 839 to 861 (KTDGEENGKVIEGTITVTYVYQK). Disordered regions lie at residues 873–949 (PETD…VDTP), 967–994 (GNPIAPQEEGTKPNKSIPGYEFTGKTVT), and 1028–1049 (KEPVTDTPTSPEGTPYDTTDNK). Residues 953-1006 (VPVKKVVTNHVDEEGNPIAPQEEGTKPNKSIPGYEFTGKTVTDEDGNTTHIYKK) form a Large repeat. A compositionally biased stretch (polar residues) spans 1033-1045 (DTPTSPEGTPYDT). The stretch at 1064–1084 (RVDGTENGKVVEGETVVTYVY) is one Small repeat. Large repeat units follow at residues 1089–1142 (TPAK…IYKK) and 1143–1195 (TPAK…IYRK). Residues 1102-1137 (EGNPVAPQEEGTKPNKSIPGYEFTGKTVTDEDGNTT) form a disordered region. The segment at 1196–1229 (LSNKPTTPEKETPAKPQAGKTASGKAQLPNTGEA) is disordered. The LPXTG sorting signal motif lies at 1223 to 1227 (LPNTG). Thr-1226 is subject to Pentaglycyl murein peptidoglycan amidated threonine. Positions 1227–1256 (GEASSVAGALGTAMLVATLAFARKRRRNED) are cleaved as a propeptide — removed by sortase.

The protein localises to the secreted. It localises to the cell wall. The chain is Muramidase-released protein (mrp) from Streptococcus suis.